Reading from the N-terminus, the 375-residue chain is Putative ZDHHC-type palmitoyltransferase 8 (375 aa).

Transmembrane regions (helical) follow at residues 4-24 (LFDF…TDFL) and 40-60 (VVGM…VSLW). Asparagine 95 is a glycosylation site (N-linked (GlcNAc...) asparagine). A run of 3 helical transmembrane segments spans residues 105 to 125 (ITFY…YYYY), 221 to 241 (FILF…LSFF), and 285 to 305 (YSFI…ILLF). One can recognise a DHHC domain in the interval 176 to 226 (VSDGKWSTINKPKSHHCRICKRCIDSMDHHCPFAANCIGINNHHYFILFIG). An N-linked (GlcNAc...) asparagine glycan is attached at asparagine 343.

The protein belongs to the DHHC palmitoyltransferase family.

Its subcellular location is the membrane. It catalyses the reaction L-cysteinyl-[protein] + hexadecanoyl-CoA = S-hexadecanoyl-L-cysteinyl-[protein] + CoA. The chain is Putative ZDHHC-type palmitoyltransferase 8 from Dictyostelium discoideum (Social amoeba).